The primary structure comprises 43 residues: Protein PsbN (43 aa).

The helical transmembrane segment at 5–25 (TLISVFVASLVIGITAYAIFV) threads the bilayer.

The protein belongs to the PsbN family.

It localises to the plastid. The protein resides in the chloroplast thylakoid membrane. Its function is as follows. May play a role in photosystem I and II biogenesis. This chain is Protein PsbN, found in Cyanidioschyzon merolae (strain NIES-3377 / 10D) (Unicellular red alga).